The following is a 420-amino-acid chain: UDP-N-acetylglucosamine 1-carboxyvinyltransferase (420 aa).

22–23 (KN) is a binding site for phosphoenolpyruvate. Arg-93 provides a ligand contact to UDP-N-acetyl-alpha-D-glucosamine. The active-site Proton donor is Cys-117. Position 117 is a 2-(S-cysteinyl)pyruvic acid O-phosphothioketal (Cys-117). UDP-N-acetyl-alpha-D-glucosamine contacts are provided by Asp-306 and Ile-328.

Belongs to the EPSP synthase family. MurA subfamily.

It is found in the cytoplasm. The catalysed reaction is phosphoenolpyruvate + UDP-N-acetyl-alpha-D-glucosamine = UDP-N-acetyl-3-O-(1-carboxyvinyl)-alpha-D-glucosamine + phosphate. It participates in cell wall biogenesis; peptidoglycan biosynthesis. Its function is as follows. Cell wall formation. Adds enolpyruvyl to UDP-N-acetylglucosamine. This Colwellia psychrerythraea (strain 34H / ATCC BAA-681) (Vibrio psychroerythus) protein is UDP-N-acetylglucosamine 1-carboxyvinyltransferase.